Here is a 674-residue protein sequence, read N- to C-terminus: Membrane-anchored lipid-binding protein LAM5 (674 aa).

Disordered stretches follow at residues 1-52 (MSDV…LNTE) and 65-151 (NQSA…GSPL). At 1-633 (MSDVDNWEPV…AEQQGLKVTM (633 aa)) the chain is on the cytoplasmic side. The segment covering 69-81 (ADEHPTEIKHDQS) has biased composition (basic and acidic residues). The segment covering 82-119 (RTSSTSSFFSGMISSFKSNVPSPVSRSTTPTSPVSQPS) has biased composition (low complexity). T110 carries the post-translational modification Phosphothreonine. S113 and S140 each carry phosphoserine. T143 carries the post-translational modification Phosphothreonine. Position 149 is a phosphoserine (S149). The GRAM domain maps to 198 to 264 (KDFHETFKSV…FEDVTFMEKT (67 aa)). Over residues 336-357 (IDEENNDKDANDNDTNENDDEN) the composition is skewed to acidic residues. A disordered region spans residues 336-380 (IDEENNDKDANDNDTNENDDENISTNETTPNSTSSSPDKEKEKAY). The span at 358-371 (ISTNETTPNSTSSS) shows a compositional bias: low complexity. A VASt domain is found at 409–582 (NEFVLKELPF…ILSKFIKNNV (174 aa)). Residues 634–654 (ETWLFLYLIVVVLLLFNLFYI) form a helical membrane-spanning segment. The Lumenal segment spans residues 655–674 (RSIAVSLHQLVKLQLVELKL).

Belongs to the YSP2 family.

Its subcellular location is the endoplasmic reticulum membrane. Functionally, may be involved in sterol transfer between intracellular membranes. The chain is Membrane-anchored lipid-binding protein LAM5 from Saccharomyces cerevisiae (strain ATCC 204508 / S288c) (Baker's yeast).